A 612-amino-acid chain; its full sequence is UvrABC system protein C (612 aa).

The GIY-YIG domain maps to 13-92 (AKPGVYIMHD…IKEHRPKYNT (80 aa)). Residues 204 to 239 (KKIMDRLTTQMQEASEKMEYEEAARYRDLLMSVKQV) enclose the UVR domain.

This sequence belongs to the UvrC family. As to quaternary structure, interacts with UvrB in an incision complex.

Its subcellular location is the cytoplasm. Functionally, the UvrABC repair system catalyzes the recognition and processing of DNA lesions. UvrC both incises the 5' and 3' sides of the lesion. The N-terminal half is responsible for the 3' incision and the C-terminal half is responsible for the 5' incision. This is UvrABC system protein C from Lachnospira eligens (strain ATCC 27750 / DSM 3376 / VPI C15-48 / C15-B4) (Eubacterium eligens).